We begin with the raw amino-acid sequence, 67 residues long: Large ribosomal subunit protein uL30 (67 aa).

The protein belongs to the universal ribosomal protein uL30 family. In terms of assembly, part of the 50S ribosomal subunit.

This is Large ribosomal subunit protein uL30 from Sorangium cellulosum (strain So ce56) (Polyangium cellulosum (strain So ce56)).